Consider the following 222-residue polypeptide: MPVSEASVSAGRRARLGGLYVIVGGADPVAQARAAIGGGARAIQVRMKDAPAGAVLEATRRILALATGRALVLVNDRADLALLAGADGVHLGDDDLPVPEARRLLGPDLLVGRTTRTLEEARAALAEGADHVGYGPIFASRSKALPVPPRGLAALAEVARALPAPVVAIGGIGLDDVAAVARAGAACAAVIEAVLGAADPEAAAARMQAAFEAGRAARGATP.

Residues 44-48 and asparagine 75 each bind 4-amino-2-methyl-5-(diphosphooxymethyl)pyrimidine; that span reads QVRMK. Aspartate 76 and aspartate 95 together coordinate Mg(2+). Threonine 114 is a 4-amino-2-methyl-5-(diphosphooxymethyl)pyrimidine binding site. 140–142 serves as a coordination point for 2-[(2R,5Z)-2-carboxy-4-methylthiazol-5(2H)-ylidene]ethyl phosphate; sequence SRS. Residue lysine 143 participates in 4-amino-2-methyl-5-(diphosphooxymethyl)pyrimidine binding. Residue glycine 171 participates in 2-[(2R,5Z)-2-carboxy-4-methylthiazol-5(2H)-ylidene]ethyl phosphate binding.

The protein belongs to the thiamine-phosphate synthase family. Mg(2+) serves as cofactor.

It carries out the reaction 2-[(2R,5Z)-2-carboxy-4-methylthiazol-5(2H)-ylidene]ethyl phosphate + 4-amino-2-methyl-5-(diphosphooxymethyl)pyrimidine + 2 H(+) = thiamine phosphate + CO2 + diphosphate. It catalyses the reaction 2-(2-carboxy-4-methylthiazol-5-yl)ethyl phosphate + 4-amino-2-methyl-5-(diphosphooxymethyl)pyrimidine + 2 H(+) = thiamine phosphate + CO2 + diphosphate. The catalysed reaction is 4-methyl-5-(2-phosphooxyethyl)-thiazole + 4-amino-2-methyl-5-(diphosphooxymethyl)pyrimidine + H(+) = thiamine phosphate + diphosphate. The protein operates within cofactor biosynthesis; thiamine diphosphate biosynthesis; thiamine phosphate from 4-amino-2-methyl-5-diphosphomethylpyrimidine and 4-methyl-5-(2-phosphoethyl)-thiazole: step 1/1. Condenses 4-methyl-5-(beta-hydroxyethyl)thiazole monophosphate (THZ-P) and 2-methyl-4-amino-5-hydroxymethyl pyrimidine pyrophosphate (HMP-PP) to form thiamine monophosphate (TMP). In Anaeromyxobacter dehalogenans (strain 2CP-C), this protein is Thiamine-phosphate synthase.